We begin with the raw amino-acid sequence, 101 residues long: Chaperone modulatory protein CbpM (101 aa).

This sequence belongs to the CbpM family.

Functionally, interacts with CbpA and inhibits both the DnaJ-like co-chaperone activity and the DNA binding activity of CbpA. Together with CbpA, modulates the activity of the DnaK chaperone system. Does not inhibit the co-chaperone activity of DnaJ. This is Chaperone modulatory protein CbpM from Escherichia coli O1:K1 / APEC.